The primary structure comprises 330 residues: Peroxisomal membrane protein PEX13 (330 aa).

Over residues 1-14 (MSAPPTNQPPPLPP) the composition is skewed to pro residues. Positions 1-20 (MSAPPTNQPPPLPPRSFDNQ) are disordered. Residues 193–213 (ASVNWPAALFWVVAIGGPWLI) traverse the membrane as a helical segment. The SH3 domain maps to 235 to 300 (APHYTAQALF…PINYVRIVGK (66 aa)).

Belongs to the peroxin-13 family. As to quaternary structure, interacts with PEX14/prx-14; forming the PEX13-PEX14 docking complex.

Its subcellular location is the peroxisome membrane. Component of the PEX13-PEX14 docking complex, a translocon channel that specifically mediates the import of peroxisomal cargo proteins bound to PEX5/prx-5 receptor. The PEX13-PEX14 docking complex forms a large import pore which can be opened to a diameter of about 9 nm. Mechanistically, PEX5/prx-5 receptor along with cargo proteins associates with the PEX14/prx-14 subunit of the PEX13-PEX14 docking complex in the cytosol, leading to the insertion of the receptor into the organelle membrane with the concomitant translocation of the cargo into the peroxisome matrix. The chain is Peroxisomal membrane protein PEX13 (prx-13) from Caenorhabditis elegans.